We begin with the raw amino-acid sequence, 343 residues long: Small ribosomal subunit biogenesis GTPase RsgA (343 aa).

One can recognise a CP-type G domain in the interval 116-275 (HGQLKPVAAN…LIDSPGIREF (160 aa)). Residues 163-166 (NKAD) and 217-225 (GQSGVGKSS) contribute to the GTP site. C299, C304, H306, and C312 together coordinate Zn(2+).

Belongs to the TRAFAC class YlqF/YawG GTPase family. RsgA subfamily. Monomer. Associates with 30S ribosomal subunit, binds 16S rRNA. Zn(2+) serves as cofactor.

The protein localises to the cytoplasm. In terms of biological role, one of several proteins that assist in the late maturation steps of the functional core of the 30S ribosomal subunit. Helps release RbfA from mature subunits. May play a role in the assembly of ribosomal proteins into the subunit. Circularly permuted GTPase that catalyzes slow GTP hydrolysis, GTPase activity is stimulated by the 30S ribosomal subunit. The sequence is that of Small ribosomal subunit biogenesis GTPase RsgA from Pseudomonas putida (strain ATCC 700007 / DSM 6899 / JCM 31910 / BCRC 17059 / LMG 24140 / F1).